The following is a 350-amino-acid chain: MQVSDFHFELPDELIARYPQPERTASRLLQLNGNSGELNDGQFTDILDLVQAGDLLVFNNTRVIPARMFGMKASGGKLEVLVERVLDEHSVLAHVRCSKSPKPGTMLLLGENQEHEAEMVARHDTLFEIRFTSDKKVLDILDEIGHMPLPPYIDRPDEDADKERYQTVYNKKPGAVAAPTAGLHFDTEILEKMKAKGVEFAYVTLHVGAGTFQPVRVDNILEHHMHSEYAEVSQEVIDAINATKARGGRVVSVGTTSVRSLESAAQHALKQGTELAPFFDDTEIFIYPGYEFQVVDALVTNFHLPESTLIMLVSAFAGYDNTMKAYEQAVNNKYRFFSYGDAMFITKKTA.

This sequence belongs to the QueA family. In terms of assembly, monomer.

It localises to the cytoplasm. It carries out the reaction 7-aminomethyl-7-carbaguanosine(34) in tRNA + S-adenosyl-L-methionine = epoxyqueuosine(34) in tRNA + adenine + L-methionine + 2 H(+). It participates in tRNA modification; tRNA-queuosine biosynthesis. Its function is as follows. Transfers and isomerizes the ribose moiety from AdoMet to the 7-aminomethyl group of 7-deazaguanine (preQ1-tRNA) to give epoxyqueuosine (oQ-tRNA). The chain is S-adenosylmethionine:tRNA ribosyltransferase-isomerase from Aliivibrio fischeri (strain MJ11) (Vibrio fischeri).